Here is a 240-residue protein sequence, read N- to C-terminus: B-cell receptor-associated protein 29 (240 aa).

Residues 1–6 (MTLQWT) are Lumenal-facing. Residues 7–27 (AVATFLYAEIGLILIFCLPFI) traverse the membrane as a helical segment. At 28 to 43 (PPQRWQKIFSFSVWGK) the chain is on the cytoplasmic side. Residues 44 to 64 (IASFWNKAFLTIIILLIVLFL) traverse the membrane as a helical segment. The Lumenal portion of the chain corresponds to 65–103 (DAVREVRKYSSTHTIEKSSASRPAAYEHTQMKLFRSQRN). Residues 104 to 124 (LYISGFSLFFWLVLRRLVTLI) form a helical membrane-spanning segment. The Cytoplasmic segment spans residues 125–240 (TQLAKELSHK…DRAGKDKKCL (116 aa)). Positions 166-233 (GKEEEHILEA…REHSELQDRA (68 aa)) form a coiled coil. Residues 237 to 240 (KKCL) carry the Di-lysine motif motif.

It belongs to the BCAP29/BCAP31 family. In terms of assembly, homodimer and heterodimer with BCAP31. Binds CASP8 as a complex containing BCAP31, BCAP29, BCL2 and/or BCL2L1. Interacts with VAMP3, VAMP1 and membrane IgD immunoglobulins. May interact with ACTG1 and non-muscle myosin II.

The protein resides in the endoplasmic reticulum membrane. In terms of biological role, may play a role in anterograde transport of membrane proteins from the endoplasmic reticulum to the Golgi. May be involved in CASP8-mediated apoptosis. The polypeptide is B-cell receptor-associated protein 29 (BCAP29) (Bos taurus (Bovine)).